Here is a 330-residue protein sequence, read N- to C-terminus: Probable aldo-keto reductase 6 (330 aa).

Tyr-64 functions as the Proton donor in the catalytic mechanism. His-132 serves as a coordination point for substrate. 211–221 (SPLGRGFLGLP) contacts NADP(+).

Belongs to the aldo/keto reductase family.

This chain is Probable aldo-keto reductase 6, found in Arabidopsis thaliana (Mouse-ear cress).